Reading from the N-terminus, the 327-residue chain is Annexin A8 (327 aa).

Annexin repeat units lie at residues 21–92 (FNPV…ALMY), 93–164 (PPYR…CLLQ), 177–249 (GLAL…TIVK), and 253–324 (NLHC…SLVG). The Ca(2+) site is built by methionine 266, glycine 268, glycine 270, and aspartate 310.

The protein belongs to the annexin family.

This protein is an anticoagulant protein that acts as an indirect inhibitor of the thromboplastin-specific complex, which is involved in the blood coagulation cascade. This Oryctolagus cuniculus (Rabbit) protein is Annexin A8 (ANXA8).